The following is a 139-amino-acid chain: Small ribosomal subunit protein eS12 (139 aa).

The protein belongs to the eukaryotic ribosomal protein eS12 family. In terms of assembly, subunit of the 40S ribosomal complex. Part of the small subunit (SSU) processome, composed of more than 70 proteins and the RNA chaperone small nucleolar RNA (snoRNA) U3.

Its subcellular location is the nucleus. The protein localises to the nucleolus. Subunit of the 40S ribosomal complex. Part of the small subunit (SSU) processome, first precursor of the small eukaryotic ribosomal subunit. During the assembly of the SSU processome in the nucleolus, many ribosome biogenesis factors, an RNA chaperone and ribosomal proteins associate with the nascent pre-rRNA and work in concert to generate RNA folding, modifications, rearrangements and cleavage as well as targeted degradation of pre-ribosomal RNA by the RNA exosome. In wing imaginal disks, might have a role in translation rate, growth and cell competition, probably through regulation of Xrp1 expression. Might have a role in development and longevity. The protein is Small ribosomal subunit protein eS12 of Drosophila melanogaster (Fruit fly).